The sequence spans 341 residues: L-threonine 3-dehydrogenase (341 aa).

Position 38 (Cys-38) interacts with Zn(2+). Active-site charge relay system residues include Thr-40 and His-43. Residues His-63, Glu-64, Cys-93, Cys-96, Cys-99, and Cys-107 each coordinate Zn(2+). Residues Ile-175, Asp-195, Arg-200, 262 to 264 (LGI), and 286 to 287 (IY) each bind NAD(+).

This sequence belongs to the zinc-containing alcohol dehydrogenase family. As to quaternary structure, homotetramer. The cofactor is Zn(2+).

The protein resides in the cytoplasm. The catalysed reaction is L-threonine + NAD(+) = (2S)-2-amino-3-oxobutanoate + NADH + H(+). It participates in amino-acid degradation; L-threonine degradation via oxydo-reductase pathway; glycine from L-threonine: step 1/2. Functionally, catalyzes the NAD(+)-dependent oxidation of L-threonine to 2-amino-3-ketobutyrate. This chain is L-threonine 3-dehydrogenase, found in Klebsiella pneumoniae (strain 342).